The chain runs to 424 residues: 23S rRNA (uracil(1939)-C(5))-methyltransferase RlmD (424 aa).

One can recognise a TRAM domain in the interval 1–56; sequence MEKFPAVTVFDLDYQGRGVAKIDGQVVFIEGALPDETVTFCKTSAKKQFIEAVVDE. Positions 69, 75, 78, and 155 each coordinate [4Fe-4S] cluster. The S-adenosyl-L-methionine site is built by Gln255, Phe284, Asn289, Glu305, Asp333, and Asp354. Cys380 serves as the catalytic Nucleophile.

It belongs to the class I-like SAM-binding methyltransferase superfamily. RNA M5U methyltransferase family. RlmD subfamily.

The catalysed reaction is uridine(1939) in 23S rRNA + S-adenosyl-L-methionine = 5-methyluridine(1939) in 23S rRNA + S-adenosyl-L-homocysteine + H(+). Its function is as follows. Catalyzes the formation of 5-methyl-uridine at position 1939 (m5U1939) in 23S rRNA. The polypeptide is 23S rRNA (uracil(1939)-C(5))-methyltransferase RlmD (Dichelobacter nodosus (strain VCS1703A)).